Reading from the N-terminus, the 250-residue chain is L-ascorbate peroxidase 1, cytosolic (250 aa).

Residue His-42 is the Proton acceptor of the active site. The segment at Val-113–Gly-137 is disordered. His-163 is a heme b binding site. K(+)-binding residues include Thr-164, Thr-180, Asn-182, and Asp-187.

Belongs to the peroxidase family. Ascorbate peroxidase subfamily. Requires heme b as cofactor.

It localises to the cytoplasm. The enzyme catalyses L-ascorbate + H2O2 = L-dehydroascorbate + 2 H2O. Plays a key role in hydrogen peroxide removal. This is L-ascorbate peroxidase 1, cytosolic (APX1) from Oryza sativa subsp. indica (Rice).